We begin with the raw amino-acid sequence, 542 residues long: Tubby-related protein 1 (542 aa).

A disordered region spans residues 1 to 289; the sequence is MPLRDETLRE…RAPSPPVEVD (289 aa). Positions 91 to 104 are enriched in basic and acidic residues; that stretch reads FLRDPEAKKRDPRE. Residues 114 to 132 show a composition bias toward acidic residues; it reads AEDEEEEEEEDEEDEEEEA. The segment covering 146-157 has biased composition (basic and acidic residues); that stretch reads PLREKSSADLKE. Over residues 262–275 the composition is skewed to basic residues; it reads SNQKGKAKGKGKKK.

This sequence belongs to the TUB family. Homodimer. May interact with ABCF1, PSIP1, ZEB1 and HMGB2 (Potential). Interacts with DNM1. Interacts with F-actin. Interacts with TUB. Interacts with TYRO3. As to expression, retina-specific.

Its subcellular location is the cytoplasm. The protein localises to the cell membrane. It is found in the secreted. The protein resides in the synapse. Functionally, required for normal development of photoreceptor synapses. Required for normal photoreceptor function and for long-term survival of photoreceptor cells. Interacts with cytoskeleton proteins and may play a role in protein transport in photoreceptor cells. Binds lipids, especially phosphatidylinositol 3-phosphate, phosphatidylinositol 4-phosphate, phosphatidylinositol 5-phosphate, phosphatidylinositol 3,4-bisphosphate, phosphatidylinositol 4,5-bisphosphate, phosphatidylinositol 3,4,5-bisphosphate, phosphatidylserine and phosphatidic acid (in vitro). Contribute to stimulation of phagocytosis of apoptotic retinal pigment epithelium (RPE) cells and macrophages. The protein is Tubby-related protein 1 (TULP1) of Homo sapiens (Human).